We begin with the raw amino-acid sequence, 88 residues long: Small ribosomal subunit protein bS20 (88 aa).

The interval 1 to 27 (MANSKSAKKRALQSEKRRQHNASRRSM) is disordered.

Belongs to the bacterial ribosomal protein bS20 family.

Its function is as follows. Binds directly to 16S ribosomal RNA. The protein is Small ribosomal subunit protein bS20 of Shewanella sp. (strain ANA-3).